A 243-amino-acid polypeptide reads, in one-letter code: MSLVLLPAVDVANGEAVRLVQGEAGSETSYGSPRDAALAWQEAGAEWVHLVDLDAAFGRGSNRELLAKVVGELDVKVELSGGIRDDDSLEAALATGCARVNLGTAALEDPQWCARAIAKHGERIAVGLDVRIIDGDYRLRGRGWVSDGGDLWEVLERLERDGCSRYVVTDVTKDGTLTGPNLELLSEVCAATEAPVIASGGVSAIEDLVAIAGLVPEGVEGAIVGKALYAGRFTLPEALAAVR.

The active-site Proton acceptor is the aspartate 10. The active-site Proton donor is the aspartate 129.

Belongs to the HisA/HisF family.

The protein resides in the cytoplasm. The catalysed reaction is 1-(5-phospho-beta-D-ribosyl)-5-[(5-phospho-beta-D-ribosylamino)methylideneamino]imidazole-4-carboxamide = 5-[(5-phospho-1-deoxy-D-ribulos-1-ylimino)methylamino]-1-(5-phospho-beta-D-ribosyl)imidazole-4-carboxamide. The protein operates within amino-acid biosynthesis; L-histidine biosynthesis; L-histidine from 5-phospho-alpha-D-ribose 1-diphosphate: step 4/9. This Nocardia farcinica (strain IFM 10152) protein is 1-(5-phosphoribosyl)-5-[(5-phosphoribosylamino)methylideneamino] imidazole-4-carboxamide isomerase.